The primary structure comprises 605 residues: DNA primase (605 aa).

Residues 38–62 (CPFHDEKTPSFTVSEDKQICHCFGC) form a CHC2-type zinc finger. In terms of domain architecture, Toprim spans 260-341 (DEIVLLEGFM…NVFVIQLPSG (82 aa)). Mg(2+) contacts are provided by glutamate 266, aspartate 310, and aspartate 312.

The protein belongs to the DnaG primase family. Monomer. Interacts with DnaB. The cofactor is Zn(2+). Mg(2+) is required as a cofactor.

The catalysed reaction is ssDNA + n NTP = ssDNA/pppN(pN)n-1 hybrid + (n-1) diphosphate.. Functionally, RNA polymerase that catalyzes the synthesis of short RNA molecules used as primers for DNA polymerase during DNA replication. In Staphylococcus aureus, this protein is DNA primase.